The primary structure comprises 209 residues: Guanylate kinase (209 aa).

One can recognise a Guanylate kinase-like domain in the interval glycine 10–valine 189. Alanine 17 to threonine 24 provides a ligand contact to ATP.

This sequence belongs to the guanylate kinase family.

Its subcellular location is the cytoplasm. It carries out the reaction GMP + ATP = GDP + ADP. Functionally, essential for recycling GMP and indirectly, cGMP. This is Guanylate kinase from Myxococcus xanthus (strain DK1622).